The following is a 53-amino-acid chain: uncharacterized protein (53 aa).

The helical transmembrane segment at 18–38 threads the bilayer; the sequence is FLFFIFYFLFFFIFFTVFGNL.

It localises to the membrane. This is an uncharacterized protein from Dictyostelium discoideum (Social amoeba).